We begin with the raw amino-acid sequence, 509 residues long: MNLLDPFMKMTDEQEKGLSGAPSPTMSEDSAGSPCPSGSGSDTENTRPQENTFPKGEPDLKKESEEDKFPVCIREAVSQVLKGYDWTLVPMPVRVNGSSKNKPHVKRPMNAFMVWAQAARRKLADQYPHLHNAELSKTLGKLWRLLNESEKRPFVEEAERLRVQHKKDHPDYKYQPRRRKSVKNGQAEAEEATEQTHISPNAIFKALQADSPHSSSGMSEVHSPGEHSGQSQGPPTPPTTPKTDVQPGKADLKREGRPLPEGGRQPPIDFRDVDIGELSSDVISNIETFDVNEFDQYLPPNGHPGVPATHGQVTYTGSYGISSTAATPAGAGHVWMSKQQAPPPPPQQPPQAPPAPQAPPQPQAAPPQQPAAPPQQPQAHTLTTLSSEPGQSQRTHIKTEQLSPSHYSEQQQHSPQQIAYSPFNLPHYSPSYPPITRSQYDYTDHQNSSSYYSHAAGQGTGLYSTFTYMNPAQRPMYTPIADTSGVPSIPQTHSPQHWEQPVYTQLTRP.

2 disordered regions span residues 1-67 (MNLL…SEED) and 160-273 (RLRV…FRDV). Residues 30–41 (SAGSPCPSGSGS) are compositionally biased toward low complexity. The segment covering 42–52 (DTENTRPQENT) has biased composition (polar residues). Composition is skewed to basic and acidic residues over residues 56–67 (GEPDLKKESEED) and 160–174 (RLRV…DYKY). Residues 63–103 (ESEEDKFPVCIREAVSQVLKGYDWTLVPMPVRVNGSSKNKP) form a dimerization (DIM) region. The segment at 63 to 103 (ESEEDKFPVCIREAVSQVLKGYDWTLVPMPVRVNGSSKNKP) is PQA. At serine 64 the chain carries Phosphoserine. The HMG box DNA-binding region spans 105-173 (VKRPMNAFMV…QHKKDHPDYK (69 aa)). Serine 211 carries the phosphoserine modification. A transactivation domain (TAM) region spans residues 224 to 307 (PGEHSGQSQG…LPPNGHPGVP (84 aa)). 2 short sequence motifs (9aaTAD) span residues 275–284 (IGELSSDVIS) and 290–298 (DVNEFDQYL). Positions 334 to 415 (VWMSKQQAPP…HYSEQQQHSP (82 aa)) are disordered. Positions 341-376 (APPPPPQQPPQAPPAPQAPPQPQAAPPQQPAAPPQQ) are enriched in pro residues. Polar residues predominate over residues 380 to 415 (HTLTTLSSEPGQSQRTHIKTEQLSPSHYSEQQQHSP). A transactivation domain (TAC) region spans residues 394 to 509 (RTHIKTEQLS…QPVYTQLTRP (116 aa)). Lysine 398 participates in a covalent cross-link: Glycyl lysine isopeptide (Lys-Gly) (interchain with G-Cter in ubiquitin). The 9aaTAD 3 signature appears at 460–468 (TGLYSTFTY). The interval 479-509 (PIADTSGVPSIPQTHSPQHWEQPVYTQLTRP) is disordered. The segment covering 485 to 509 (GVPSIPQTHSPQHWEQPVYTQLTRP) has biased composition (polar residues).

As to quaternary structure, homodimer; homodimerization is required for activity. Interacts (via C-terminus) with ZNF219; forming a complex that binds to the COL2A1 promoter and activates COL2A1 expression. Interacts with DDRGK1. Interacts with EP300/p300. Interacts with beta-catenin (CTNNB1); inhibiting CTNNB1 activity by competing with the binding sites of TCF/LEF within CTNNB1. Acetylated; acetylation impairs nuclear localization and ability to transactivate expression of target genes. Deacetylated by SIRT1. Post-translationally, phosphorylation at Ser-64 and Ser-211 by PKA increases transcriptional activity and may help delay chondrocyte maturation downstream of PTHLH/PTHrP signaling. Phosphorylation at either Ser-64 or Ser-211 is required for sumoylation, but phosphorylation is not dependent on sumoylation. Phosphorylated on tyrosine residues; tyrosine dephosphorylation by PTPN11/SHP2 blocks SOX9 phosphorylation by PKA and subsequent SUMOylation. In terms of processing, sumoylated; phosphorylation at either Ser-64 or Ser-211 is required for sumoylation. Sumoylation is induced by BMP signaling pathway. Ubiquitinated; ubiquitination leads to proteasomal degradation and is negatively regulated by DDRGK1.

It is found in the nucleus. Transcription factor that plays a key role in chondrocytes differentiation and skeletal development. Specifically binds the 5'-ACAAAG-3' DNA motif present in enhancers and super-enhancers and promotes expression of genes important for chondrogenesis, including cartilage matrix protein-coding genes COL2A1, COL4A2, COL9A1, COL11A2 and ACAN, SOX5 and SOX6. Also binds to some promoter regions. Plays a central role in successive steps of chondrocyte differentiation. Absolutely required for precartilaginous condensation, the first step in chondrogenesis during which skeletal progenitors differentiate into prechondrocytes. Together with SOX5 and SOX6, required for overt chondrogenesis when condensed prechondrocytes differentiate into early stage chondrocytes, the second step in chondrogenesis. Later, required to direct hypertrophic maturation and block osteoblast differentiation of growth plate chondrocytes: maintains chondrocyte columnar proliferation, delays prehypertrophy and then prevents osteoblastic differentiation of chondrocytes by lowering beta-catenin (CTNNB1) signaling and RUNX2 expression. Also required for chondrocyte hypertrophy, both indirectly, by keeping the lineage fate of chondrocytes, and directly, by remaining present in upper hypertrophic cells and transactivating COL10A1 along with MEF2C. Low lipid levels are the main nutritional determinant for chondrogenic commitment of skeletal progenitor cells: when lipids levels are low, FOXO (FOXO1 and FOXO3) transcription factors promote expression of SOX9, which induces chondrogenic commitment and suppresses fatty acid oxidation. Mechanistically, helps, but is not required, to remove epigenetic signatures of transcriptional repression and deposit active promoter and enhancer marks at chondrocyte-specific genes. Acts in cooperation with the Hedgehog pathway-dependent GLI (GLI1 and GLI3) transcription factors. In addition to cartilage development, also acts as a regulator of proliferation and differentiation in epithelial stem/progenitor cells: involved in the lung epithelium during branching morphogenesis, by balancing proliferation and differentiation and regulating the extracellular matrix. Controls epithelial branching during kidney development. This Callithrix jacchus (White-tufted-ear marmoset) protein is Transcription factor SOX-9 (SOX9).